The following is a 415-amino-acid chain: Gamma-glutamyl phosphate reductase (415 aa).

It belongs to the gamma-glutamyl phosphate reductase family.

It is found in the cytoplasm. The enzyme catalyses L-glutamate 5-semialdehyde + phosphate + NADP(+) = L-glutamyl 5-phosphate + NADPH + H(+). It participates in amino-acid biosynthesis; L-proline biosynthesis; L-glutamate 5-semialdehyde from L-glutamate: step 2/2. In terms of biological role, catalyzes the NADPH-dependent reduction of L-glutamate 5-phosphate into L-glutamate 5-semialdehyde and phosphate. The product spontaneously undergoes cyclization to form 1-pyrroline-5-carboxylate. The sequence is that of Gamma-glutamyl phosphate reductase from Clostridium perfringens (strain ATCC 13124 / DSM 756 / JCM 1290 / NCIMB 6125 / NCTC 8237 / Type A).